Here is a 623-residue protein sequence, read N- to C-terminus: MKTSLRRLRGVLHKHESKDRRDLRALVQKDELAQASQDVEDMRDCYDSLLNAAAATANSAYEFSESLRELGACLLEKTALNDDEESGRVLIMLGKLQFELQKLVDKYRSHIFQTITIPSESLLNELRIVEEMQRLCDEKRNVYEGMLTRQREKGRSKGGKGETFSPQQLQEAHDDYENETTLFVFRLKSLKQGQTRSLLTQAARHHAAQLCFFKKALSSLEEVDPHVQMVTESQHIDYHFSGLEDDDGDDEIENNENDGSEVHDDGELSFEYRVNDKDQDADSSAGGSSELGNSDITFPQIGGPYTAQENEEGNYRKSHSFRRDVRAVSQSAPLFPENRTTPPSEKLLRMRSTLTRKFNTYALPTPVETTRSPSSTTSPGHKNVGSSNPTKAITKQIWYSSPLETRGPAKVSSRSMVALKEQVLRESNKNTSRLPPPLADGLLFSRLGTLKRRSFSGPLTSKPLPNKPLSTTSHLYSGPIPRNPVSKLPKVSSSPTASPTFVSTPKISELHELPRPPPRSSTKSSRELGYSAPLVSRSQLLSKPLITNSASPLPIPPAITRSFSIPTSNLRASDLDMSKTSLGTKKLGTPSPPLTPMSLIHPPPQALPERADHLMMSKQERRI.

The stretch at arginine 24–asparagine 51 forms a coiled coil. 5 disordered regions span residues threonine 148–glutamine 170, phenylalanine 240–proline 343, alanine 362–isoleucine 393, serine 454–serine 531, and lysine 585–leucine 607. Residues leucine 243–glycine 259 are compositionally biased toward acidic residues. Residues valine 328 to proline 343 show a composition bias toward polar residues. Over residues proline 364–proline 379 the composition is skewed to low complexity. Over residues valine 384–isoleucine 393 the composition is skewed to polar residues. Residues proline 484–proline 495 are compositionally biased toward low complexity. Residues threonine 496–lysine 506 are compositionally biased toward polar residues. Positions proline 590–alanine 606 are enriched in pro residues.

This is an uncharacterized protein from Arabidopsis thaliana (Mouse-ear cress).